A 1087-amino-acid polypeptide reads, in one-letter code: Alpha-mannosidase G (1087 aa).

Residues histidine 264, aspartate 266, aspartate 376, and histidine 579 each contribute to the Zn(2+) site. Aspartate 376 (nucleophile) is an active-site residue.

The protein belongs to the glycosyl hydrolase 38 family. Requires Zn(2+) as cofactor.

The enzyme catalyses Hydrolysis of terminal, non-reducing alpha-D-mannose residues in alpha-D-mannosides.. The protein is Alpha-mannosidase G (manG) of Dictyostelium discoideum (Social amoeba).